A 1383-amino-acid polypeptide reads, in one-letter code: Cell surface hyaluronidase (1383 aa).

The segment at 1-76 (MYAAGSRGHS…QRTPSESRKR (76 aa)) is disordered. Over 1-82 (MYAAGSRGHS…SRKRKRHKNT (82 aa)) the chain is Cytoplasmic. A phosphoserine mark is found at S10, S53, and S63. A helical; Signal-anchor for type II membrane protein transmembrane segment spans residues 83–103 (FICFAITSFSFFVALAVILGI). Over 104–1383 (SSKYAPDENC…DLLQQALKVL (1280 aa)) the chain is Extracellular. Residues 121–245 (RNWDPGQDSA…QRTSWTMLAR (125 aa)) form the G8 domain. Residues 255–412 (GSYAFEKDFS…ISLSGFRVDI (158 aa)) form the GG-type lectin 1 domain. Residue N292 is glycosylated (N-linked (GlcNAc...) asparagine). 3 PbH1 repeats span residues 669–691 (HPNN…WYLF), 711–733 (TPLG…FVDK), and 791–812 (GGDI…TFAS). Residues N914 and N1234 are each glycosylated (N-linked (GlcNAc...) asparagine). The 159-residue stretch at 1208 to 1366 (KSYLPVRFQS…MEEYGCSRTG (159 aa)) folds into the GG-type lectin 2 domain.

It belongs to the CEMIP family. Ca(2+) serves as cofactor. In terms of tissue distribution, widely expressed. Strongly expressed in endothelial cells in the subcapsular sinus of lymph nodes and in the liver sinusoid, two primary sites implicated in systemic hyaluronan turnover.

It is found in the cell membrane. It catalyses the reaction Random hydrolysis of (1-&gt;4)-linkages between N-acetyl-beta-D-glucosamine and D-glucuronate residues in hyaluronate.. In terms of biological role, cell surface hyaluronidase that mediates the initial cleavage of extracellular high-molecular-weight hyaluronan into intermediate-size hyaluronan of approximately 5 kDa fragments. Very specific to hyaluronan; not able to cleave chondroitin sulfate or dermatan sulfate. Has an essential function in systemic hyaluronan catabolism and turnover and regulates cell adhesion and migration via hyaluronan degradation at focal adhesion sites. Acts as a regulator of angiogenesis and heart morphogenesis by mediating degradation of extracellular hyaluronan, thereby regulating VEGF signaling. This chain is Cell surface hyaluronidase, found in Mus musculus (Mouse).